Consider the following 362-residue polypeptide: Peptide chain release factor 1 (362 aa).

An N5-methylglutamine modification is found at Gln-238.

It belongs to the prokaryotic/mitochondrial release factor family. In terms of processing, methylated by PrmC. Methylation increases the termination efficiency of RF1.

Its subcellular location is the cytoplasm. Functionally, peptide chain release factor 1 directs the termination of translation in response to the peptide chain termination codons UAG and UAA. The chain is Peptide chain release factor 1 from Psychrobacter cryohalolentis (strain ATCC BAA-1226 / DSM 17306 / VKM B-2378 / K5).